The chain runs to 115 residues: Pancreatic progenitor cell differentiation and proliferation factor B (115 aa).

Positions 21 to 48 (IGSTSSSSSCGSSEYSGEVIPHHPGLPK) are disordered. Low complexity predominate over residues 22-37 (GSTSSSSSCGSSEYSG).

The protein belongs to the PPDPF family.

Probable regulator of exocrine pancreas development. The protein is Pancreatic progenitor cell differentiation and proliferation factor B (ppdpfb) of Danio rerio (Zebrafish).